The primary structure comprises 262 residues: Phosphatidylglycerol--prolipoprotein diacylglyceryl transferase (262 aa).

4 helical membrane-spanning segments follow: residues 9–29, 41–61, 80–100, and 109–129; these read LGPL…ILAV, IIPD…ILGA, IFAI…GALV, and LINT…AQSL. A 1,2-diacyl-sn-glycero-3-phospho-(1'-sn-glycerol) is bound at residue Arg-131. Helical transmembrane passes span 167–187, 197–217, and 226–246; these read QPTF…ILIF, GHIT…IEGM, and GFRV…MIVI.

The protein belongs to the Lgt family.

The protein localises to the cell membrane. It catalyses the reaction L-cysteinyl-[prolipoprotein] + a 1,2-diacyl-sn-glycero-3-phospho-(1'-sn-glycerol) = an S-1,2-diacyl-sn-glyceryl-L-cysteinyl-[prolipoprotein] + sn-glycerol 1-phosphate + H(+). The protein operates within protein modification; lipoprotein biosynthesis (diacylglyceryl transfer). In terms of biological role, catalyzes the transfer of the diacylglyceryl group from phosphatidylglycerol to the sulfhydryl group of the N-terminal cysteine of a prolipoprotein, the first step in the formation of mature lipoproteins. This is Phosphatidylglycerol--prolipoprotein diacylglyceryl transferase from Streptococcus pneumoniae serotype 4 (strain ATCC BAA-334 / TIGR4).